The following is a 76-amino-acid chain: Antimicrobial peptide Smp24 (76 aa).

The first 22 residues, 1–22 (MQYKTFLVIFMAYLLVTHEAEA), serve as a signal peptide directing secretion. A propeptide spanning residues 47 to 76 (SKRKRDVEDFFDPYQRDLDLELERLLSQLQ) is cleaved from the precursor.

This sequence belongs to the non-disulfide-bridged peptide (NDBP) superfamily. Medium-length antimicrobial peptide (group 3) family. In terms of tissue distribution, expressed by the venom gland.

It localises to the secreted. The protein resides in the target cell membrane. Peptide that shows antimicrobial activity, moderate cytolysis on eukaryote cells and interference with DNA synthesis. Has potent activity against Gram-positive bacteria and moderate activity against Gram-negative bacteria, as well as moderate activity against fungi. Acts by inducing bacterial membrane disruption. Uses multiple modes of action depending on the membrane lipid composition. Uses a toroidal pore mechanism against the prokaryotic like membrane and forms hexagonal phase non-lamellar structures in eukaryotic-like membrane. Shows activity against B.subtilis (MIC=4 ug/ml), S.epidermidis (MIC=8 ug/ml), S.aureus (MIC=8 ug/ml), E.coli (MIC=64 ug/ml), K.pneumoniae (MIC=128 ug/ml), P.aeruginosa (MIC=256 ug/ml), and C.albicans (MIC=32 ug/ml). Shows moderate hemolysis activity. The sequence is that of Antimicrobial peptide Smp24 from Scorpio palmatus (Israeli golden scorpion).